The chain runs to 249 residues: Probable calcium-binding protein CML12 (249 aa).

The span at 1 to 24 (MQSQRERPREDRVHEETRGADHAH) shows a compositional bias: basic and acidic residues. Residues 1–80 (MQSQRERPRE…RKGKAPATAE (80 aa)) form a disordered region. Over residues 30–56 (AAAAASATATETATRTMSLHAGGVVVV) the composition is skewed to low complexity. A compositionally biased stretch (basic and acidic residues) spans 57–70 (DGKEKGKKEEGEGK). EF-hand domains are found at residues 91–126 (EQLRQLHEIFLRFDLDGDGSLTKLELAALLRSLGLR), 128–163 (AAGDEIHALIAAIDADGNGTVEFDELASSLADLILG), 171–206 (VDQAELAEAFRAFDRDGNGFISAAELARSMARMGHP), and 207–242 (ICYAELTDMMREADTDGDGLISFEEFTAIMAKSALD). Ca(2+) contacts are provided by Asp-104, Asp-106, Asp-108, Ser-110, Glu-115, Asp-141, Asp-143, Asn-145, Thr-147, Glu-152, Asp-184, Asp-186, Asn-188, Glu-195, Asp-220, Asp-222, Asp-224, and Glu-231.

Potential calcium sensor. The polypeptide is Probable calcium-binding protein CML12 (CML12) (Oryza sativa subsp. japonica (Rice)).